A 156-amino-acid chain; its full sequence is 6,7-dimethyl-8-ribityllumazine synthase (156 aa).

5-amino-6-(D-ribitylamino)uracil is bound by residues F22, 57-59 (AYE), and 81-83 (TVI). Position 86 to 87 (86 to 87 (GT)) interacts with (2S)-2-hydroxy-3-oxobutyl phosphate. H89 functions as the Proton donor in the catalytic mechanism. Residue F114 participates in 5-amino-6-(D-ribitylamino)uracil binding. R128 serves as a coordination point for (2S)-2-hydroxy-3-oxobutyl phosphate.

It belongs to the DMRL synthase family. In terms of assembly, forms an icosahedral capsid composed of 60 subunits, arranged as a dodecamer of pentamers.

The catalysed reaction is (2S)-2-hydroxy-3-oxobutyl phosphate + 5-amino-6-(D-ribitylamino)uracil = 6,7-dimethyl-8-(1-D-ribityl)lumazine + phosphate + 2 H2O + H(+). It functions in the pathway cofactor biosynthesis; riboflavin biosynthesis; riboflavin from 2-hydroxy-3-oxobutyl phosphate and 5-amino-6-(D-ribitylamino)uracil: step 1/2. Catalyzes the formation of 6,7-dimethyl-8-ribityllumazine by condensation of 5-amino-6-(D-ribitylamino)uracil with 3,4-dihydroxy-2-butanone 4-phosphate. This is the penultimate step in the biosynthesis of riboflavin. The polypeptide is 6,7-dimethyl-8-ribityllumazine synthase (Edwardsiella ictaluri (strain 93-146)).